The primary structure comprises 512 residues: Endo-1,4-beta-xylanase A (512 aa).

A signal peptide spans 1 to 30 (MKRKVKKMAAMATSIIMAIMIILHSIPVLA). In terms of domain architecture, GH11 spans 33 to 228 (IIYDNETGTH…SSGYANVYKN (196 aa)). The Nucleophile role is filled by glutamate 124. Glutamate 215 (proton donor) is an active-site residue. CBM6 domains follow at residues 251–371 (SIIE…FIFS) and 388–508 (SIIQ…FVFS). Ca(2+)-binding residues include glutamate 254 and glutamate 256. Threonine 271 contacts D-xylotriose. Arginine 276 serves as a coordination point for Ca(2+). Copy 1 of the repeat occupies 279–340 (GYIENGNTVT…SSTGSWNTYQ (62 aa)). The segment at 279 to 477 (GYIENGNTVT…GSTGSFDTYR (199 aa)) is 2 X 61 AA approximate repeats. Positions 280, 337, and 364 each coordinate D-xylotriose. D-xylobiose contacts are provided by tyrosine 280, asparagine 337, and asparagine 364. Positions 366, 391, 393, and 413 each coordinate Ca(2+). Repeat 2 spans residues 416–477 (GYIENGYSTT…GSTGSFDTYR (62 aa)). D-xylotriose is bound by residues tyrosine 417, aspartate 474, and asparagine 501. Aspartate 503 contributes to the Ca(2+) binding site.

The protein belongs to the glycosyl hydrolase 11 (cellulase G) family.

It catalyses the reaction Endohydrolysis of (1-&gt;4)-beta-D-xylosidic linkages in xylans.. It participates in glycan degradation; xylan degradation. The polypeptide is Endo-1,4-beta-xylanase A (xynA) (Thermoclostridium stercorarium (Clostridium stercorarium)).